Here is a 331-residue protein sequence, read N- to C-terminus: Spondin-2 (331 aa).

A signal peptide spans 1–26 (MENPSPAAALGKALCALLLATLGAAG). Residues 31-221 (GESICSARAL…EITSSSPSHP (191 aa)) form the Spondin domain. Cysteines 35 and 171 form a disulfide. Glu-141 is an a divalent metal cation binding site. Ca(2+) is bound by residues Asp-160, Asp-188, and Asp-192. The TSP type-1 domain maps to 277 to 331 (DCEVSLWSSWGLCGGHCGRLGTKSRTRYVRVQPANNGSPCPELEEEAECVPDNCV). A glycan (C-linked (Man) tryptophan) is linked at Trp-283.

As to quaternary structure, monomer. Interacts with integrin. Expressed in normal lung tissue but not in lung carcinoma cell lines.

The protein localises to the secreted. It is found in the extracellular space. The protein resides in the extracellular matrix. Its function is as follows. Cell adhesion protein that promotes adhesion and outgrowth of hippocampal embryonic neurons. Binds directly to bacteria and their components and functions as an opsonin for macrophage phagocytosis of bacteria. Essential in the initiation of the innate immune response and represents a unique pattern-recognition molecule in the ECM for microbial pathogens. Binds bacterial lipopolysaccharide (LPS). The polypeptide is Spondin-2 (SPON2) (Homo sapiens (Human)).